Reading from the N-terminus, the 363-residue chain is MSSRPQVSVISVKGEQGSSQLPLPAVFAAPVRPDLVHSVFVRVNKNKRQAYAVAENAGHQTSAESWGTGRAVARIPRVGGGGTHRSGQAAFGNMCRGGRMFAPTKTWRRWNVKVNHNEKRYATASAIAASAVTSLVLARGHRVEQVKELPLVVSNEFESVTKTKDAVAVLKAVGAHKDVVKVIKSKKLRAGKGKLRGRRFTQRRGPLVVYAQDNGIVKALRNVPGVETASVKHLGLLQLAPGAHLGRFIIWTQGAFESLDSVYGSDSTKSIKSGYTLPSNIISNTDVTRLINSAEVQAVVRPAGEKTQKKSHVLKKNPLKNKQVLLRLNPYAKAYAAEKVGSAKVEQAKVKPSKGQFAEVLKN.

The protein belongs to the universal ribosomal protein uL4 family. As to quaternary structure, component of the large ribosomal subunit. Mature ribosomes consist of a small (40S) and a large (60S) subunit. The 40S subunit contains about 32 different proteins and 1 molecule of RNA (18S). The 60S subunit contains 45 different proteins and 3 molecules of RNA (25S, 5.8S and 5S).

It is found in the cytoplasm. Its function is as follows. Component of the ribosome, a large ribonucleoprotein complex responsible for the synthesis of proteins in the cell. The small ribosomal subunit (SSU) binds messenger RNAs (mRNAs) and translates the encoded message by selecting cognate aminoacyl-transfer RNA (tRNA) molecules. The large subunit (LSU) contains the ribosomal catalytic site termed the peptidyl transferase center (PTC), which catalyzes the formation of peptide bonds, thereby polymerizing the amino acids delivered by tRNAs into a polypeptide chain. The nascent polypeptides leave the ribosome through a tunnel in the LSU and interact with protein factors that function in enzymatic processing, targeting, and the membrane insertion of nascent chains at the exit of the ribosomal tunnel. The polypeptide is Large ribosomal subunit protein uL4 (Candida albicans (strain SC5314 / ATCC MYA-2876) (Yeast)).